The following is a 560-amino-acid chain: OTU domain-containing protein 5-A (560 aa).

2 disordered regions span residues 1–100 (MTIL…MACV) and 141–190 (GGGT…QSED). Residues 17 to 32 (DHPDDPDRRTGSDPHQ) are compositionally biased toward basic and acidic residues. Over residues 141 to 163 (GGGTGPGAAGGGGGGGGGGGVGG) the composition is skewed to gly residues. The 124-residue stretch at 211-334 (FVIKKMKEDG…NIHYNSVVNP (124 aa)) folds into the OTU domain. The interval 216–222 (MKEDGAC) is cys-loop. Residue Asp-219 is part of the active site. Cys-222 functions as the Nucleophile in the catalytic mechanism. Residues 271-281 (KRKNNCHGNHI) form a variable-loop region. The tract at residues 322-327 (YHRNIH) is his-loop. His-327 is an active-site residue. The interval 411-496 (ARQPRKASAT…ACVGPDRPTS (86 aa)) is disordered. 2 stretches are compositionally biased toward low complexity: residues 417–430 (ASAT…AASS) and 437–448 (ARSPRQRSSAPS).

The protein belongs to the peptidase C85 family.

It catalyses the reaction Thiol-dependent hydrolysis of ester, thioester, amide, peptide and isopeptide bonds formed by the C-terminal Gly of ubiquitin (a 76-residue protein attached to proteins as an intracellular targeting signal).. Deubiquitinating enzyme that may function as negative regulator of the innate immune system. Has peptidase activity towards 'Lys-48'- and 'Lys-63'-linked polyubiquitin chains. Can also cleave 'Lys-11'-linked ubiquitin chains (in vitro). The polypeptide is OTU domain-containing protein 5-A (otud5a) (Danio rerio (Zebrafish)).